Reading from the N-terminus, the 530-residue chain is V(D)J recombination-activating protein 2 (530 aa).

The PHD-type; atypical zinc finger occupies 416–485 (WIKCCLSCQV…KYFCLDHGGL (70 aa)). Residues cysteine 419, cysteine 423, cysteine 446, histidine 453, histidine 456, cysteine 459, cysteine 479, and histidine 482 each coordinate Zn(2+).

Belongs to the RAG2 family. Component of the RAG complex composed of core components rag1 and rag2.

It localises to the nucleus. In terms of biological role, core component of the RAG complex, a multiprotein complex that mediates the DNA cleavage phase during V(D)J recombination. V(D)J recombination assembles a diverse repertoire of immunoglobulin and T-cell receptor genes in developing B and T lymphocytes through rearrangement of different V (variable), in some cases D (diversity), and J (joining) gene segments. DNA cleavage by the RAG complex occurs in 2 steps: a first nick is introduced in the top strand immediately upstream of the heptamer, generating a 3'-hydroxyl group that can attack the phosphodiester bond on the opposite strand in a direct transesterification reaction, thereby creating 4 DNA ends: 2 hairpin coding ends and 2 blunt, 5'-phosphorylated ends. In the RAG complex, rag2 is not the catalytic component but is required for all known catalytic activities mediated by RAG1. It probably acts as a sensor of chromatin state that recruits the RAG complex to H3K4me3. The polypeptide is V(D)J recombination-activating protein 2 (rag2) (Danio rerio (Zebrafish)).